The sequence spans 672 residues: Protein seu-1 (672 aa).

Disordered stretches follow at residues 1-463 (MSSI…AGTE) and 576-672 (LAPP…LKHL). Over residues 8 to 20 (NDNRRPTFRDHRT) the composition is skewed to basic and acidic residues. Over residues 25 to 34 (GRGGSGGGGR) the composition is skewed to gly residues. Positions 62 to 85 (RSQDHRQRSPEVRRHRSPEKESKD) are enriched in basic and acidic residues. Over residues 87–105 (VVTSTGSSRGATSASVTSS) the composition is skewed to low complexity. 4 stretches are compositionally biased toward basic and acidic residues: residues 107–138 (RRHESGERHRETHRREDKEKKPEKSTDRDADR), 189–226 (VSRHSENRRKSSSDVSRRHGDKEKRDRKREDVKKKSNG), 234–268 (RRREEDHKRKSESSRKEKKDEDVKEKVVDENKVED), and 289–306 (EQAKEHGSDEPERPESHQ). Residues 307–317 (SAHSAAVSNAS) show a composition bias toward low complexity. Residues 322–343 (SEEELDYEEDDIDVDLDGDIDV) are compositionally biased toward acidic residues. Basic and acidic residues-rich tracts occupy residues 366 to 375 (NDVKDETMEE), 382 to 396 (PEKKKPRTSENDDKD), 410 to 424 (RREDDKDRRQSSDHH), 436 to 447 (RATDHKESRRSE), 607 to 626 (SFGDRGNRSDEHHGGSRHMD), and 636 to 659 (DHRVRDDGRRVSSFEDRKRPERGF).

In terms of tissue distribution, highly expressed in intestinal cells, lateral hypodermal (seam) cells, Pn.p ventral hypodermal cells, and spermatheca. Expressed at low levels in the ventral nerve cord.

It is found in the nucleus. Together with unc-5, involved in touch neuron axon guidance. During gonad morphogenesis, plays a role in the unc-5-/unc-6-mediated migration of distal tip cells along the body. This Caenorhabditis elegans protein is Protein seu-1.